The primary structure comprises 362 residues: 3-dehydroquinate synthase (362 aa).

Residues 71–76 (DGEQYK), 105–109 (GVVGD), 129–130 (TT), lysine 142, lysine 151, and 169–172 (CLKT) contribute to the NAD(+) site. Zn(2+)-binding residues include glutamate 184, histidine 248, and histidine 265.

Belongs to the sugar phosphate cyclases superfamily. Dehydroquinate synthase family. Requires Co(2+) as cofactor. Zn(2+) serves as cofactor. NAD(+) is required as a cofactor.

The protein localises to the cytoplasm. It carries out the reaction 7-phospho-2-dehydro-3-deoxy-D-arabino-heptonate = 3-dehydroquinate + phosphate. It functions in the pathway metabolic intermediate biosynthesis; chorismate biosynthesis; chorismate from D-erythrose 4-phosphate and phosphoenolpyruvate: step 2/7. Its function is as follows. Catalyzes the conversion of 3-deoxy-D-arabino-heptulosonate 7-phosphate (DAHP) to dehydroquinate (DHQ). This is 3-dehydroquinate synthase from Yersinia pseudotuberculosis serotype O:1b (strain IP 31758).